A 250-amino-acid chain; its full sequence is Indole-3-glycerol phosphate synthase (250 aa).

It belongs to the TrpC family.

The catalysed reaction is 1-(2-carboxyphenylamino)-1-deoxy-D-ribulose 5-phosphate + H(+) = (1S,2R)-1-C-(indol-3-yl)glycerol 3-phosphate + CO2 + H2O. Its pathway is amino-acid biosynthesis; L-tryptophan biosynthesis; L-tryptophan from chorismate: step 4/5. In Picrophilus torridus (strain ATCC 700027 / DSM 9790 / JCM 10055 / NBRC 100828 / KAW 2/3), this protein is Indole-3-glycerol phosphate synthase.